Reading from the N-terminus, the 405-residue chain is Bifunctional enzyme IspD/IspF (405 aa).

Residues 1–240 (MTLADKPVLS…KLLLDEPKYR (240 aa)) are 2-C-methyl-D-erythritol 4-phosphate cytidylyltransferase. The 2-C-methyl-D-erythritol 2,4-cyclodiphosphate synthase stretch occupies residues 240–405 (RVGTGYDIHR…LLYKIAPLHN (166 aa)). A divalent metal cation-binding residues include Asp-246 and His-248. 4-CDP-2-C-methyl-D-erythritol 2-phosphate is bound by residues 246-248 (DIH) and 277-278 (HS). His-285 contributes to the a divalent metal cation binding site. 4-CDP-2-C-methyl-D-erythritol 2-phosphate is bound by residues 299–301 (DIG), 375–378 (TTTE), and Arg-385.

It in the N-terminal section; belongs to the IspD/TarI cytidylyltransferase family. IspD subfamily. In the C-terminal section; belongs to the IspF family. It depends on a divalent metal cation as a cofactor.

The enzyme catalyses 2-C-methyl-D-erythritol 4-phosphate + CTP + H(+) = 4-CDP-2-C-methyl-D-erythritol + diphosphate. The catalysed reaction is 4-CDP-2-C-methyl-D-erythritol 2-phosphate = 2-C-methyl-D-erythritol 2,4-cyclic diphosphate + CMP. Its pathway is isoprenoid biosynthesis; isopentenyl diphosphate biosynthesis via DXP pathway; isopentenyl diphosphate from 1-deoxy-D-xylulose 5-phosphate: step 2/6. It participates in isoprenoid biosynthesis; isopentenyl diphosphate biosynthesis via DXP pathway; isopentenyl diphosphate from 1-deoxy-D-xylulose 5-phosphate: step 4/6. Its function is as follows. Bifunctional enzyme that catalyzes the formation of 4-diphosphocytidyl-2-C-methyl-D-erythritol from CTP and 2-C-methyl-D-erythritol 4-phosphate (MEP) (IspD), and catalyzes the conversion of 4-diphosphocytidyl-2-C-methyl-D-erythritol 2-phosphate (CDP-ME2P) to 2-C-methyl-D-erythritol 2,4-cyclodiphosphate (ME-CPP) with a corresponding release of cytidine 5-monophosphate (CMP) (IspF). This Wolbachia sp. subsp. Brugia malayi (strain TRS) protein is Bifunctional enzyme IspD/IspF.